Consider the following 334-residue polypeptide: Holliday junction branch migration complex subunit RuvB (334 aa).

The segment at 4–184 (ADRLIQPQIQ…FGIPLRLEFY (181 aa)) is large ATPase domain (RuvB-L). ATP-binding positions include Arg24, Gly65, Lys68, Thr69, Thr70, 131-133 (EDY), Arg174, Tyr184, and Arg221. Mg(2+) is bound at residue Thr69. The small ATPAse domain (RuvB-S) stretch occupies residues 185-255 (NIKDLSTIVT…VAEHALDLLD (71 aa)). Positions 258 to 334 (SEGFDYMDRK…YQHFELIKPE (77 aa)) are head domain (RuvB-H). DNA-binding residues include Arg294, Arg313, and Arg318.

The protein belongs to the RuvB family. Homohexamer. Forms an RuvA(8)-RuvB(12)-Holliday junction (HJ) complex. HJ DNA is sandwiched between 2 RuvA tetramers; dsDNA enters through RuvA and exits via RuvB. An RuvB hexamer assembles on each DNA strand where it exits the tetramer. Each RuvB hexamer is contacted by two RuvA subunits (via domain III) on 2 adjacent RuvB subunits; this complex drives branch migration. In the full resolvosome a probable DNA-RuvA(4)-RuvB(12)-RuvC(2) complex forms which resolves the HJ.

It localises to the cytoplasm. The enzyme catalyses ATP + H2O = ADP + phosphate + H(+). In terms of biological role, the RuvA-RuvB-RuvC complex processes Holliday junction (HJ) DNA during genetic recombination and DNA repair, while the RuvA-RuvB complex plays an important role in the rescue of blocked DNA replication forks via replication fork reversal (RFR). RuvA specifically binds to HJ cruciform DNA, conferring on it an open structure. The RuvB hexamer acts as an ATP-dependent pump, pulling dsDNA into and through the RuvAB complex. RuvB forms 2 homohexamers on either side of HJ DNA bound by 1 or 2 RuvA tetramers; 4 subunits per hexamer contact DNA at a time. Coordinated motions by a converter formed by DNA-disengaged RuvB subunits stimulates ATP hydrolysis and nucleotide exchange. Immobilization of the converter enables RuvB to convert the ATP-contained energy into a lever motion, pulling 2 nucleotides of DNA out of the RuvA tetramer per ATP hydrolyzed, thus driving DNA branch migration. The RuvB motors rotate together with the DNA substrate, which together with the progressing nucleotide cycle form the mechanistic basis for DNA recombination by continuous HJ branch migration. Branch migration allows RuvC to scan DNA until it finds its consensus sequence, where it cleaves and resolves cruciform DNA. This Shewanella baltica (strain OS155 / ATCC BAA-1091) protein is Holliday junction branch migration complex subunit RuvB.